We begin with the raw amino-acid sequence, 747 residues long: Plakophilin-1 (747 aa).

The required for binding to single stranded DNA stretch occupies residues 1–234 (MNHSPLKTAL…SFGHSRASSK (234 aa)). The segment at 1–286 (MNHSPLKTAL…ESAKQQVYQL (286 aa)) is required for interaction with EIF4A1. S4 carries the post-translational modification Phosphoserine. Residues 48–68 (TVKRQKSKSSQSSTLSHSNRG) form a disordered region. Phosphorylation in this region is required for cytoplasmic localization and protein stabilization regions lie at residues 54-69 (SKSS…NRGS) and 116-191 (RFSS…STCS). At S118 the chain carries Phosphoserine; by PKB/AKT2. S119, S121, and S142 each carry phosphoserine. Residues 160-269 (YCDPRGTLRK…KYQAIGAYYI (110 aa)) are required for WNT-mediated nuclear localization. ARM repeat units follow at residues 243–274 (SGLT…HTCF), 275–316 (QDES…NLVF), 317–359 (RSTT…NLSS), 360–415 (TDEL…KRLG), 416–463 (MREL…NCVA), 525–556 (NYDC…LNLM), 557–603 (GKSK…IARL), 604–649 (LQSG…SHTG), and 650–713 (NTSN…DMWS).

It belongs to the beta-catenin family. As to quaternary structure, part of a complex that contains DSG3, PKP1, YAP1 and YWHAG; the complex is required for localization of DSG3 and YAP1 to the cell membrane in keratinocytes. Interacts with DSP. Interacts (via N-terminus) with KRT5/CK5, KRT8/CK8 (via rod domain), KRT15/CK15 and KRT18/CK18 (via rod domain) as part of intermediate filaments. Interacts with VIM (via rod domain). Interacts with DSP. Interacts with DES. Interacts with FXR1; the interaction may facilitate the binding of PKP1 to PKP2, PKP3 and DSP mRNA. Interacts (via N-terminus) with EIF4A1; the interaction promotes EIF4A1 recruitment to the cap-dependent translation complex and EIF4A1 ATPase activity. Interacts with TJP1/ZO-1; the interaction facilitates TJP1/ZO-1 localization to the plasma membrane. Interacts (when phosphorylated) with YWHAG; the interaction results in translocation of PKP1 to the cytoplasm and loss of intercellular adhesion in keratinocytes. Post-translationally, phosphorylated by AKT2; required for interaction with YWHAG and subsequent localization away from desmosomes to the cytoplasm. Phosphorylation of Ser-118 by AKT2 promotes PKP1-driven cap-dependent mRNA translation and decreases intercellular adhesion, phosphorylation is promoted by insulin. Phosphorylation by RIPK4 at the N-terminus is required for its role in differentiation of keratinocytes and DSG1 localization at cell junctions. In terms of tissue distribution, expressed in stratified squamous, complex, glandular duct and bladder epithelia (at protein level). As to expression, widely expressed (at protein level).

The protein localises to the cell junction. It localises to the desmosome. The protein resides in the nucleus. It is found in the cytoplasm. Its subcellular location is the perinuclear region. The protein localises to the cell membrane. It localises to the stress granule. Its function is as follows. A component of desmosome cell-cell junctions which are required for positive regulation of cellular adhesion. Plays a role in desmosome protein expression regulation and localization to the desmosomal plaque, thereby maintaining cell sheet integrity and anchorage of desmosomes to intermediate filaments. Required for localization of DSG3 and YAP1 to the cell membrane in keratinocytes in response to mechanical strain, via the formation of an interaction complex composed of DSG3, YAP1, PKP1 and YWHAG. Positively regulates differentiation of keratinocytes, potentially via promoting localization of DSG1 at desmosome cell junctions. Required for calcium-independent development and maturation of desmosome plaques specifically at lateral cell-cell contacts in differentiating keratinocytes. Plays a role in the maintenance of DSG3 protein abundance, DSG3 clustering and localization of these clusters to the cell membrane in keratinocytes. May also promote keratinocyte proliferation and morphogenesis during postnatal development. Required for tight junction inside-out transepidermal barrier function of the skin. Promotes Wnt-mediated proliferation and differentiation of ameloblasts, via facilitating TJP1/ZO-1 localization to tight junctions. Binds single-stranded DNA (ssDNA), and may thereby play a role in sensing DNA damage and promoting cell survival. Positively regulates cap-dependent translation and as a result cell proliferation, via recruitment of EIF4A1 to the initiation complex and promotion of EIF4A1 ATPase activity. Regulates the mRNA stability and protein abundance of desmosome components PKP2, PKP3, DSC2 and DSP, potentially via its interaction with FXR1. This chain is Plakophilin-1 (PKP1), found in Homo sapiens (Human).